Reading from the N-terminus, the 179-residue chain is Nucleoside diphosphate kinase 6 (179 aa).

The ATP site is built by lysine 18, phenylalanine 67, arginine 95, threonine 101, arginine 115, and asparagine 125. Histidine 128 acts as the Pros-phosphohistidine intermediate in catalysis.

It belongs to the NDK family. Mg(2+) is required as a cofactor.

It catalyses the reaction a 2'-deoxyribonucleoside 5'-diphosphate + ATP = a 2'-deoxyribonucleoside 5'-triphosphate + ADP. It carries out the reaction a ribonucleoside 5'-diphosphate + ATP = a ribonucleoside 5'-triphosphate + ADP. Major role in the synthesis of nucleoside triphosphates other than ATP. The ATP gamma phosphate is transferred to the NDP beta phosphate via a ping-pong mechanism, using a phosphorylated active-site intermediate. The sequence is that of Nucleoside diphosphate kinase 6 (nme6) from Xenopus tropicalis (Western clawed frog).